The chain runs to 364 residues: Probable tartrate dehydrogenase/decarboxylase TtuC (364 aa).

Aspartate 222, aspartate 246, and aspartate 250 together coordinate Mn(2+).

This sequence belongs to the isocitrate and isopropylmalate dehydrogenases family. Mg(2+) is required as a cofactor. Requires Mn(2+) as cofactor. It depends on K(+) as a cofactor.

It is found in the cytoplasm. It carries out the reaction tartrate + NAD(+) = 2-hydroxy-3-oxosuccinate + NADH + H(+). The enzyme catalyses (2R,3S)-tartrate + NAD(+) = 2-hydroxy-3-oxosuccinate + NADH + H(+). It catalyses the reaction (2R,3R)-tartrate + NAD(+) = 2-hydroxy-3-oxosuccinate + NADH + H(+). The catalysed reaction is (2R,3R)-tartrate + H(+) = (R)-glycerate + CO2. It carries out the reaction (R)-malate + NAD(+) = pyruvate + CO2 + NADH. It functions in the pathway carbohydrate acid metabolism; tartrate degradation; 2-hydroxy-3-oxosuccinate from L-tartrate: step 1/1. Its pathway is carbohydrate acid metabolism; tartrate degradation; 2-hydroxy-3-oxosuccinate from meso-tartrate: step 1/1. It participates in carbohydrate acid metabolism; tartrate degradation; D-glycerate from L-tartrate: step 1/1. Functionally, has multiple catalytic activities. Apart from catalyzing the oxidation of (+)-tartrate to oxaloglycolate, also converts meso-tartrate to D-glycerate and catalyzes the oxidative decarboxylation of D-malate to pyruvate. This chain is Probable tartrate dehydrogenase/decarboxylase TtuC (ttuC), found in Agrobacterium vitis (Rhizobium vitis).